The chain runs to 906 residues: Protein translocase subunit SecA (906 aa).

ATP is bound by residues Q86, 104-108 (GEGKT), and D499. Positions 862 to 885 (KPVVSRIDPKDRNPDDPTSWGRVS) are disordered. Zn(2+) contacts are provided by C890, C892, C901, and H902.

Belongs to the SecA family. Monomer and homodimer. Part of the essential Sec protein translocation apparatus which comprises SecA, SecYEG and auxiliary proteins SecDF-YajC and YidC. Zn(2+) serves as cofactor.

The protein resides in the cell inner membrane. It is found in the cytoplasm. It carries out the reaction ATP + H2O + cellular proteinSide 1 = ADP + phosphate + cellular proteinSide 2.. Part of the Sec protein translocase complex. Interacts with the SecYEG preprotein conducting channel. Has a central role in coupling the hydrolysis of ATP to the transfer of proteins into and across the cell membrane, serving both as a receptor for the preprotein-SecB complex and as an ATP-driven molecular motor driving the stepwise translocation of polypeptide chains across the membrane. This is Protein translocase subunit SecA from Rickettsia massiliae (strain Mtu5).